A 364-amino-acid chain; its full sequence is DNA polymerase IV (364 aa).

The 185-residue stretch at 14–198 folds into the UmuC domain; the sequence is IIHIDMDAFF…LPIEKFHGVG (185 aa). The Mg(2+) site is built by D18 and D116. E117 is an active-site residue.

This sequence belongs to the DNA polymerase type-Y family. As to quaternary structure, monomer. It depends on Mg(2+) as a cofactor.

The protein localises to the cytoplasm. It carries out the reaction DNA(n) + a 2'-deoxyribonucleoside 5'-triphosphate = DNA(n+1) + diphosphate. Functionally, poorly processive, error-prone DNA polymerase involved in untargeted mutagenesis. Copies undamaged DNA at stalled replication forks, which arise in vivo from mismatched or misaligned primer ends. These misaligned primers can be extended by PolIV. Exhibits no 3'-5' exonuclease (proofreading) activity. May be involved in translesional synthesis, in conjunction with the beta clamp from PolIII. This is DNA polymerase IV from Streptococcus agalactiae serotype Ia (strain ATCC 27591 / A909 / CDC SS700).